The following is a 2286-amino-acid chain: Unconventional myosin-IXAb (2286 aa).

In terms of domain architecture, Ras-associating spans 16-114 (SEFTLRVYPG…YRFLLREKNL (99 aa)). Positions 148-971 (AQFVADLCSL…LRQRLQDELH (824 aa)) constitute a Myosin motor domain. A helical membrane pass occupies residues 178 to 198 (IYTYVGSILIAVNPFKFLPIY). 242–249 (GESGSGKT) contributes to the ATP binding site. The actin-binding stretch occupies residues 853 to 875 (LNKLMETLGQSEPYFVKCIRSNA). IQ domains follow at residues 976–996 (RRIVCLQRSFRTQRDRKHFCR), 1025–1054 (QQGAALRLQAVWRGFRARRLYLQQRRAVLI), 1066–1095 (RNTAATLIQAVWRTRTHRRSFLQQRRAAVT), and 1089–1118 (QRRAAVTLQAACRGQQSRQRCRILREQQCR). The segment at 976–1113 (RRIVCLQRSF…QSRQRCRILR (138 aa)) is neck or regulatory domain. Residues 1114–2254 (EQQCREQSKH…PRANRSCPPK (1141 aa)) are tail. 4 disordered regions span residues 1118-1279 (REQS…QIRE), 1308-1341 (DVPLSNGESASDCSIIPEPRTNHELDTGSSFSVS), 1455-1588 (CEED…EPML), and 1732-1754 (DGTISKAPKPERKKRRKKESDTV). The span at 1123 to 1133 (HPSTVTKSLHQ) shows a compositional bias: polar residues. Basic and acidic residues predominate over residues 1134–1149 (NTEEAEKLEEVWEKQT). The span at 1263 to 1273 (PINSAPQTPNR) shows a compositional bias: polar residues. Residues 1455–1465 (CEEDEDDEYED) show a composition bias toward acidic residues. Residues 1485–1501 (CVFHSDSEMSSQKEQKR) show a composition bias toward basic and acidic residues. The span at 1529–1542 (RGKMRFWSKSKHGD) shows a compositional bias: basic residues. 2 stretches are compositionally biased toward basic and acidic residues: residues 1550–1562 (RSADSELTDRRND) and 1572–1585 (GVSERRRDSKENRE). The Phorbol-ester/DAG-type zinc finger occupies 1759–1808 (GHIFKSTQYSIPTYCEFCSSLIWMMDKACVCKLCRYACHKKCCLRMTTKC). The region spanning 1823 to 2011 (VELSRLTSDE…LIICEQMRKY (189 aa)) is the Rho-GAP domain. The segment covering 2032–2049 (LTHIRRSMGKSRARKSGH) has biased composition (basic residues). 2 disordered regions span residues 2032–2087 (LTHI…QQEE) and 2113–2286 (PRAS…EFMV). Positions 2080-2107 (QAAMQQEEKVLTQQIENLQKEKEELTYE) form a coiled coil. 2 stretches are compositionally biased toward low complexity: residues 2176 to 2192 (SLDSVDSAVASLSSVSS) and 2200 to 2211 (SSSSGPLFSSSS). Positions 2226-2238 (EQASLSARCASSS) are enriched in polar residues. Positions 2254-2270 (KPREPGDTGGRRREHEF) are enriched in basic and acidic residues.

Belongs to the TRAFAC class myosin-kinesin ATPase superfamily. Myosin family.

The protein localises to the membrane. It localises to the cytoplasm. The protein resides in the synapse. Its subcellular location is the cell projection. It is found in the growth cone. Functionally, myosins are actin-based motor molecules with ATPase activity. Unconventional myosins serve in intracellular movements. Regulates Rho by stimulating it's GTPase activity in neurons. Required for the regulation of neurite branching and motor neuron axon guidance. This Danio rerio (Zebrafish) protein is Unconventional myosin-IXAb (myo9ab).